Reading from the N-terminus, the 130-residue chain is Protein BLT4 (130 aa).

The first 25 residues, 1 to 25, serve as a signal peptide directing secretion; it reads MARTAATKLALVPLVAAMLLVAADA. The segment at 80-130 is disordered; the sequence is VPARTTPAGPQASPPGAASASPTRSAPVSTALRSTDRTRAPHISSDRRLVG. The segment covering 84 to 110 has biased composition (low complexity); it reads TTPAGPQASPPGAASASPTRSAPVSTA. Basic and acidic residues predominate over residues 113–130; the sequence is STDRTRAPHISSDRRLVG.

The protein belongs to the plant LTP family. Shoot meristem.

Functionally, possible dehydrative stress responsive protein. Not shown to have lipid transfer activity. The polypeptide is Protein BLT4 (BLT4) (Hordeum vulgare (Barley)).